The sequence spans 91 residues: uncharacterized protein (91 aa).

Residues methionine 1 to alanine 21 form the signal peptide.

Belongs to the BhsA/McbA family.

It localises to the periplasm. This is an uncharacterized protein from Escherichia coli O157:H7.